The chain runs to 316 residues: L-lactate dehydrogenase (316 aa).

Residues Val-15, Asp-37, Lys-42, Tyr-68, and 82–83 (GL) contribute to the NAD(+) site. Residues Gln-85, Arg-91, and 123–126 (NPVD) contribute to the substrate site. Residues 121-123 (ASN) and Thr-146 contribute to the NAD(+) site. 151–154 (DTSR) is a binding site for substrate. Beta-D-fructose 1,6-bisphosphate is bound by residues Arg-156 and His-171. The active-site Proton acceptor is His-178. Phosphotyrosine is present on Tyr-222. Thr-231 contributes to the substrate binding site.

It belongs to the LDH/MDH superfamily. LDH family. Homotetramer.

It is found in the cytoplasm. The catalysed reaction is (S)-lactate + NAD(+) = pyruvate + NADH + H(+). It functions in the pathway fermentation; pyruvate fermentation to lactate; (S)-lactate from pyruvate: step 1/1. Allosterically activated by fructose 1,6-bisphosphate (FBP). Functionally, catalyzes the conversion of lactate to pyruvate. This is L-lactate dehydrogenase from Borreliella afzelii (strain PKo) (Borrelia afzelii).